Here is a 408-residue protein sequence, read N- to C-terminus: Na(+)-translocating NADH-quinone reductase subunit F (408 aa).

A helical membrane pass occupies residues 4-24 (VYLGVGMFTAIVLVLVLVILF). Residues 33–127 (GDIIIGINGD…DMEIELDEEI (95 aa)) form the 2Fe-2S ferredoxin-type domain. Positions 70, 76, 79, and 111 each coordinate [2Fe-2S] cluster. In terms of domain architecture, FAD-binding FR-type spans 130–270 (IKKWECDVIS…SGPFGEFFAK (141 aa)).

The protein belongs to the NqrF family. As to quaternary structure, composed of six subunits; NqrA, NqrB, NqrC, NqrD, NqrE and NqrF. It depends on [2Fe-2S] cluster as a cofactor. FAD serves as cofactor.

It localises to the cell inner membrane. The enzyme catalyses a ubiquinone + n Na(+)(in) + NADH + H(+) = a ubiquinol + n Na(+)(out) + NAD(+). NQR complex catalyzes the reduction of ubiquinone-1 to ubiquinol by two successive reactions, coupled with the transport of Na(+) ions from the cytoplasm to the periplasm. The first step is catalyzed by NqrF, which accepts electrons from NADH and reduces ubiquinone-1 to ubisemiquinone by a one-electron transfer pathway. The polypeptide is Na(+)-translocating NADH-quinone reductase subunit F (Shewanella denitrificans (strain OS217 / ATCC BAA-1090 / DSM 15013)).